The chain runs to 1240 residues: Ubiquitin carboxyl-terminal hydrolase 36 (1240 aa).

Disordered regions lie at residues 37–56 (AKTSNGGGDGSSTSGSSTDN) and 100–144 (SNGG…GTSA). 2 stretches are compositionally biased toward low complexity: residues 47 to 56 (SSTSGSSTDN) and 101 to 132 (NGGAASNGNGNYNGSNKTNGKFGAGNGHDNNG). The region spanning 202–512 (TGMLNVGNTC…NAYIMFYELD (311 aa)) is the USP domain. The active-site Nucleophile is Cys-211. His-471 (proton acceptor) is an active-site residue. The disordered stretch occupies residues 637-705 (ANKSSCNTLN…KMFEESSESV (69 aa)). Residues 639–649 (KSSCNTLNNSK) are compositionally biased toward polar residues. Positions 650-662 (QHQPQQQQQQPQH) are enriched in low complexity. Residues 668–680 (SDEEEDSDDDNDN) are compositionally biased toward acidic residues. Thr-715 is modified (phosphothreonine). Disordered regions lie at residues 723–818 (YESA…KQKT), 831–998 (YKNK…GESL), 1076–1163 (DMSS…EYES), and 1198–1240 (RFAG…QQQS). A phosphoserine mark is found at Ser-725 and Ser-727. Positions 733–744 (QQQQQQQTLQQQ) are enriched in low complexity. The span at 759-769 (SDTDDDDDEEQ) shows a compositional bias: acidic residues. Low complexity predominate over residues 794-815 (NSSSSKTKSASNASSANVNSSK). The span at 843–859 (DDDDDDDEDEDEDEDEA) shows a compositional bias: acidic residues. Low complexity predominate over residues 869 to 879 (TKSSSSSSSTS). The span at 880–890 (LTNGWQQSQNG) shows a compositional bias: polar residues. Ser-895 bears the Phosphoserine mark. Position 898 is a phosphothreonine (Thr-898). Ser-901 carries the post-translational modification Phosphoserine. Residues 918–941 (DEDDDENVDGVADADDDDDNDEVA) show a composition bias toward acidic residues. Positions 976–988 (LNGSSKSQQTTPR) are enriched in polar residues. Residues 1076 to 1103 (DMSSSSSSSSSTNSSSNSSSRSNGNSSN) show a composition bias toward low complexity. Residues 1111-1120 (AEAREQRKRD) are compositionally biased toward basic and acidic residues. Residues 1231 to 1240 (QSSGQQQQQS) are compositionally biased toward low complexity.

Belongs to the peptidase C19 family. Interacts with atms/PAF1, but not with CycT.

The protein resides in the nucleus. It localises to the nucleolus. It carries out the reaction Thiol-dependent hydrolysis of ester, thioester, amide, peptide and isopeptide bonds formed by the C-terminal Gly of ubiquitin (a 76-residue protein attached to proteins as an intracellular targeting signal).. Required for maintaining multiple types of adult stem cells, including male and female germline, epithelial follicle cell and intestinal stem cells. May function as a transcriptional repressor by continually deubiquiting histone H2B at the promoters of genes critical for cellular differentiation, thereby preventing histone H3 'Lys-4' trimethylation (H3K4). Controls selective autophagy activation by ubiquitinated proteins. This Drosophila grimshawi (Hawaiian fruit fly) protein is Ubiquitin carboxyl-terminal hydrolase 36 (Usp36).